A 959-amino-acid polypeptide reads, in one-letter code: Transcription factor 1 (959 aa).

C2H2-type zinc fingers lie at residues 2 to 24 (VFCTYCGHSFTRDEHLERHILTH) and 30 to 52 (FKCFTCHMSFARRDLLQGHYTVH). Positions 79–105 (CSNCAKTKTKCDKKFPCSRCASRNLRC) form a DNA-binding region, zn(2)-C6 fungal-type. The segment at 154–226 (PTGHVEESSK…SFPGFDDYNQ (73 aa)) is disordered. Residues 163 to 178 (KSSSPSGSPTSISHNS) show a composition bias toward low complexity.

It is found in the nucleus. Elsinochromes biosynthesis cluster-specific transcription factor that positively regulates the expression of cluster genes including RDT1, PKS1, PRF1 and HP1, and subsequent elsinochromes production. The polypeptide is Transcription factor 1 (Elsinoe fawcettii (Citrus scab fungus)).